We begin with the raw amino-acid sequence, 202 residues long: NADH-quinone oxidoreductase subunit C (202 aa).

The protein belongs to the complex I 30 kDa subunit family. As to quaternary structure, NDH-1 is composed of 14 different subunits. Subunits NuoB, C, D, E, F, and G constitute the peripheral sector of the complex.

The protein resides in the cell inner membrane. The enzyme catalyses a quinone + NADH + 5 H(+)(in) = a quinol + NAD(+) + 4 H(+)(out). NDH-1 shuttles electrons from NADH, via FMN and iron-sulfur (Fe-S) centers, to quinones in the respiratory chain. The immediate electron acceptor for the enzyme in this species is believed to be ubiquinone. Couples the redox reaction to proton translocation (for every two electrons transferred, four hydrogen ions are translocated across the cytoplasmic membrane), and thus conserves the redox energy in a proton gradient. This Paracidovorax citrulli (strain AAC00-1) (Acidovorax citrulli) protein is NADH-quinone oxidoreductase subunit C.